The chain runs to 232 residues: Ubiquinone biosynthesis O-methyltransferase (232 aa).

S-adenosyl-L-methionine-binding residues include Arg36, Gly55, Asp76, and Leu120.

The protein belongs to the methyltransferase superfamily. UbiG/COQ3 family.

It carries out the reaction a 3-demethylubiquinol + S-adenosyl-L-methionine = a ubiquinol + S-adenosyl-L-homocysteine + H(+). The catalysed reaction is a 3-(all-trans-polyprenyl)benzene-1,2-diol + S-adenosyl-L-methionine = a 2-methoxy-6-(all-trans-polyprenyl)phenol + S-adenosyl-L-homocysteine + H(+). Its pathway is cofactor biosynthesis; ubiquinone biosynthesis. Its function is as follows. O-methyltransferase that catalyzes the 2 O-methylation steps in the ubiquinone biosynthetic pathway. The chain is Ubiquinone biosynthesis O-methyltransferase from Pseudomonas paraeruginosa (strain DSM 24068 / PA7) (Pseudomonas aeruginosa (strain PA7)).